The primary structure comprises 99 residues: Carboxysome shell vertex protein CcmL (99 aa).

Residues 1-83 (MRIAKVRGTV…VDAAVIAIID (83 aa)) form the BMV domain.

It belongs to the CcmL/EutN family. CcmL subfamily. In terms of assembly, homopentamer. Interacts with full-length CcmM.

It localises to the carboxysome. Functionally, probably forms vertices in the carboxysome, a polyhedral inclusion where RuBisCO (ribulose bisphosphate carboxylase, rbcL-rbcS) is sequestered. Has been modeled to induce curvature upon insertion into an otherwise flat hexagonal molecular layer of CcmK subunits. Beta-carboxysome assembly initiates when soluble RuBisCO is condensed into a liquid matrix in a pre-carboxysome by the RbcS-like domains of probably both CcmM58 and CcmM35. CcmN interacts with the N-terminus of CcmM58, and then recruits the CcmK2 major shell protein via CcmN's encapsulation peptide. Shell formation requires CcmK proteins and CcmO. CcmL caps the otherwise elongated carboxysome. Once fully encapsulated carboxysomes are formed, they migrate within the cell probably via interactions with the cytoskeleton. The protein is Carboxysome shell vertex protein CcmL of Synechococcus elongatus (strain ATCC 33912 / PCC 7942 / FACHB-805) (Anacystis nidulans R2).